The chain runs to 136 residues: HTH-type transcriptional regulator LrpA (136 aa).

An HTH asnC-type domain is found at 2–63; it reads IDEIDKKILD…EVNQVKLGFS (62 aa). Positions 21–40 form a DNA-binding region, H-T-H motif; that stretch reads MKKLGEKVHLTAPATASRVV.

Its function is as follows. Negative regulation of glyA transcription and kinB-dependent sporulation. This is HTH-type transcriptional regulator LrpA (lrpA) from Bacillus subtilis (strain 168).